A 1343-amino-acid chain; its full sequence is DNA-directed RNA polymerase subunit beta (1343 aa).

It belongs to the RNA polymerase beta chain family. The RNAP catalytic core consists of 2 alpha, 1 beta, 1 beta' and 1 omega subunit. When a sigma factor is associated with the core the holoenzyme is formed, which can initiate transcription.

It carries out the reaction RNA(n) + a ribonucleoside 5'-triphosphate = RNA(n+1) + diphosphate. In terms of biological role, DNA-dependent RNA polymerase catalyzes the transcription of DNA into RNA using the four ribonucleoside triphosphates as substrates. This chain is DNA-directed RNA polymerase subunit beta, found in Shewanella loihica (strain ATCC BAA-1088 / PV-4).